The primary structure comprises 530 residues: Ataxin-10 homolog (530 aa).

It belongs to the ataxin-10 family.

The protein resides in the cytoplasm. May play a role in the regulation of cytokinesis. This is Ataxin-10 homolog (CTR86) from Candida glabrata (strain ATCC 2001 / BCRC 20586 / JCM 3761 / NBRC 0622 / NRRL Y-65 / CBS 138) (Yeast).